An 88-amino-acid chain; its full sequence is Small ribosomal subunit protein bS20 (88 aa).

The protein belongs to the bacterial ribosomal protein bS20 family.

Binds directly to 16S ribosomal RNA. This Methylorubrum extorquens (strain CM4 / NCIMB 13688) (Methylobacterium extorquens) protein is Small ribosomal subunit protein bS20.